Here is a 228-residue protein sequence, read N- to C-terminus: Mediator of RNA polymerase II transcription subunit 7-B (228 aa).

Belongs to the Mediator complex subunit 7 family. In terms of assembly, component of the Mediator complex.

The protein localises to the nucleus. Its function is as follows. Component of the Mediator complex, a coactivator involved in the regulated transcription of nearly all RNA polymerase II-dependent genes. Mediator functions as a bridge to convey information from gene-specific regulatory proteins to the basal RNA polymerase II transcription machinery. Mediator is recruited to promoters by direct interactions with regulatory proteins and serves as a scaffold for the assembly of a functional preinitiation complex with RNA polymerase II and the general transcription factors. The polypeptide is Mediator of RNA polymerase II transcription subunit 7-B (med7-b) (Xenopus laevis (African clawed frog)).